The primary structure comprises 232 residues: uncharacterized protein (232 aa).

5 consecutive transmembrane segments (helical) span residues 4 to 24, 42 to 62, 100 to 120, 145 to 165, and 171 to 191; these read LLGV…YVFE, VLVG…LAVL, LFFI…ILHM, LAFV…FFTL, and GNLI…WVGF.

The protein resides in the cell membrane. This is an uncharacterized protein from Aquifex aeolicus (strain VF5).